The primary structure comprises 377 residues: MAKKDYYEVLGLQKGATEKDIKRAYKRLAAKYHPDKNQGSKDSEEKFKQITEAYEILTDDQKRAAYDQYGHAAFEQGSSNGGFNGFGGGFGGFEDIFSEMFGGGFGGGSRRQHVVRGQDLRYDIEISLEEAVKGCKKDIRLSTLAECDNCHGTGAEAGTKVENCPHCHGAGRIRRQQGFFVTEAVCPSCHGTGKKIEKPCHSCHGDGRVQKAKNLSVTIPAGVDTGNQLRLSGEGEAGENGAPAGDLYVVIHVREHNIFTRDGANLYCEVPISFSMAALGGEIEVPTLDGKLKLKIPTETQTGKLFRVRGKGVVSPRGGYAGDLICKVVVETPVQLNEEQKELLRQLEISLDGKANHRPQQAGFLDSVKNFFTHLGK.

A J domain is found at 5–70 (DYYEVLGLQK…QKRAAYDQYG (66 aa)). Residues 134–212 (GCKKDIRLST…CHGDGRVQKA (79 aa)) form a CR-type zinc finger. Zn(2+) is bound by residues C147, C150, C164, C167, C186, C189, C200, and C203. CXXCXGXG motif repeat units lie at residues 147–154 (CDNCHGTG), 164–171 (CPHCHGAG), 186–193 (CPSCHGTG), and 200–207 (CHSCHGDG).

The protein belongs to the DnaJ family. Homodimer. Zn(2+) is required as a cofactor.

Its subcellular location is the cytoplasm. In terms of biological role, participates actively in the response to hyperosmotic and heat shock by preventing the aggregation of stress-denatured proteins and by disaggregating proteins, also in an autonomous, DnaK-independent fashion. Unfolded proteins bind initially to DnaJ; upon interaction with the DnaJ-bound protein, DnaK hydrolyzes its bound ATP, resulting in the formation of a stable complex. GrpE releases ADP from DnaK; ATP binding to DnaK triggers the release of the substrate protein, thus completing the reaction cycle. Several rounds of ATP-dependent interactions between DnaJ, DnaK and GrpE are required for fully efficient folding. Also involved, together with DnaK and GrpE, in the DNA replication of plasmids through activation of initiation proteins. The protein is Chaperone protein DnaJ of Haemophilus ducreyi (strain 35000HP / ATCC 700724).